Consider the following 326-residue polypeptide: Zinc finger CCCH domain-containing protein 15 (326 aa).

A compositionally biased stretch (gly residues) spans 1 to 14 (MADGGGGGEAGSGG). Positions 1–142 (MADGGGGGEA…SSSGSGSGEV (142 aa)) are disordered. Positions 24–33 (KPPKNIRKRP) are enriched in basic residues. Residues 47–64 (SGAIAAARAKKAPSSTSK) are compositionally biased toward low complexity. A compositionally biased stretch (polar residues) spans 81-100 (YESSRTIQASTDSRATATLE). The segment covering 104-125 (EFDRDARAIRERQLKQAEESLK) has biased composition (basic and acidic residues). The C3H1-type zinc-finger motif lies at 187–215 (DYQPDICKDYKETGYCGYGDSCKFMHDRG). An RING-type zinc finger spans residues 265–303 (CYICREPFVDPVVTKCKHYFCEHCALKHHSKNKKCFVCN).

The polypeptide is Zinc finger CCCH domain-containing protein 15 (Oryza sativa subsp. japonica (Rice)).